The primary structure comprises 779 residues: Nucleolar complex protein 3 homolog (779 aa).

Disordered stretches follow at residues 1-20 (MGFA…TNKT) and 100-189 (NAKR…SHLS). Positions 114–124 (DSDEDEDEDDV) are enriched in acidic residues. A compositionally biased stretch (basic and acidic residues) spans 136–160 (EEGHEELLPIKLKDGTLIRPTREKE). Acidic residues predominate over residues 161-178 (VEEQEEEEKSDIDEGEED). The stretch at 434–474 (AKKYQIKKERASKTAKKYKKQLARLEADLLEVEAEESLTKK) forms a coiled coil.

The protein belongs to the CBF/MAK21 family.

The protein resides in the nucleus. It is found in the nucleolus. This Caenorhabditis briggsae protein is Nucleolar complex protein 3 homolog.